Reading from the N-terminus, the 931-residue chain is Phosphoenolpyruvate carboxylase (931 aa).

Active-site residues include histidine 158 and lysine 593.

Belongs to the PEPCase type 1 family. Mg(2+) is required as a cofactor.

It catalyses the reaction oxaloacetate + phosphate = phosphoenolpyruvate + hydrogencarbonate. Functionally, forms oxaloacetate, a four-carbon dicarboxylic acid source for the tricarboxylic acid cycle. This is Phosphoenolpyruvate carboxylase from Azorhizobium caulinodans (strain ATCC 43989 / DSM 5975 / JCM 20966 / LMG 6465 / NBRC 14845 / NCIMB 13405 / ORS 571).